The sequence spans 807 residues: Ecotropic viral integration site 5 ortholog (807 aa).

Residues 1 to 31 form a disordered region; that stretch reads MTLTTTTTASSAESQAKMDVKGGALPGEENL. Thr33 bears the Phosphothreonine mark. Phosphoserine occurs at positions 58 and 64. Positions 116–300 constitute a Rab-GAP TBC domain; sequence GIPHHFRAIV…RIMDVFLSEG (185 aa). Coiled coils occupy residues 352–463, 494–583, and 627–772; these read SIKL…ENNV, CLLE…ENQR, and REME…RGKF.

In terms of assembly, interacts with Rab11.

Its subcellular location is the cytoplasm. It is found in the endosome. Functions as a GTPase-activating protein (GAP). During border cell migration in the ovary, acts as a GAP for Rab11 and is necessary for the maintenance of active receptor tyrosine kinases at the leading edge. This Drosophila melanogaster (Fruit fly) protein is Ecotropic viral integration site 5 ortholog (Evi5).